The chain runs to 252 residues: 3-dehydroquinate dehydratase (252 aa).

Residues S21, 46-48 (EWR), and R82 each bind 3-dehydroquinate. H143 acts as the Proton donor/acceptor in catalysis. K170 functions as the Schiff-base intermediate with substrate in the catalytic mechanism. 3-dehydroquinate contacts are provided by R213, S232, and Q236.

This sequence belongs to the type-I 3-dehydroquinase family. As to quaternary structure, homodimer.

The catalysed reaction is 3-dehydroquinate = 3-dehydroshikimate + H2O. It functions in the pathway metabolic intermediate biosynthesis; chorismate biosynthesis; chorismate from D-erythrose 4-phosphate and phosphoenolpyruvate: step 3/7. Its function is as follows. Involved in the third step of the chorismate pathway, which leads to the biosynthesis of aromatic amino acids. Catalyzes the cis-dehydration of 3-dehydroquinate (DHQ) and introduces the first double bond of the aromatic ring to yield 3-dehydroshikimate. In Escherichia coli O6:K15:H31 (strain 536 / UPEC), this protein is 3-dehydroquinate dehydratase.